The primary structure comprises 144 residues: Large ribosomal subunit protein uL15 (144 aa).

The segment at 1 to 52 (MRLNTLSPAEGAKHSAKRLGRGIGSGLGKTGGRGHKGQKSRTGSGVRRGFEG) is disordered. Over residues 21-31 (RGIGSGLGKTG) the composition is skewed to gly residues.

The protein belongs to the universal ribosomal protein uL15 family. As to quaternary structure, part of the 50S ribosomal subunit.

In terms of biological role, binds to the 23S rRNA. In Haemophilus influenzae (strain 86-028NP), this protein is Large ribosomal subunit protein uL15.